The chain runs to 113 residues: MFIFNWFKSFFTDFFSTTPGEGVVPISNDYLPLTVVEYVYMGDGTVEAVTMTYEEAQEYYKNPWRWSTPTTSSNTQNTQSSSDSYDTNVPVHVWAGDSCGSSCDSSCSSTSCD.

The segment at 66–85 is disordered; it reads WSTPTTSSNTQNTQSSSDSY. Over residues 67–85 the composition is skewed to low complexity; sequence STPTTSSNTQNTQSSSDSY.

This is an uncharacterized protein from Escherichia coli (Bacteriophage T4).